The following is a 120-amino-acid chain: Large ribosomal subunit protein bL20 (120 aa).

It belongs to the bacterial ribosomal protein bL20 family.

Its function is as follows. Binds directly to 23S ribosomal RNA and is necessary for the in vitro assembly process of the 50S ribosomal subunit. It is not involved in the protein synthesizing functions of that subunit. This chain is Large ribosomal subunit protein bL20, found in Xanthobacter autotrophicus (strain ATCC BAA-1158 / Py2).